The chain runs to 367 residues: Uroporphyrinogen decarboxylase (367 aa).

Residues 27–31 (RQAGR), D77, Y157, T212, and H333 contribute to the substrate site.

Belongs to the uroporphyrinogen decarboxylase family. In terms of assembly, homodimer.

Its subcellular location is the cytoplasm. The catalysed reaction is uroporphyrinogen III + 4 H(+) = coproporphyrinogen III + 4 CO2. The protein operates within porphyrin-containing compound metabolism; protoporphyrin-IX biosynthesis; coproporphyrinogen-III from 5-aminolevulinate: step 4/4. Its function is as follows. Catalyzes the decarboxylation of four acetate groups of uroporphyrinogen-III to yield coproporphyrinogen-III. The protein is Uroporphyrinogen decarboxylase of Cupriavidus metallidurans (strain ATCC 43123 / DSM 2839 / NBRC 102507 / CH34) (Ralstonia metallidurans).